The chain runs to 526 residues: Peptide chain release factor 3 (526 aa).

The 267-residue stretch at 11-277 folds into the tr-type G domain; it reads SKRRTFAIIS…SLIKWAPSPL (267 aa). GTP contacts are provided by residues 20 to 27, 88 to 92, and 142 to 145; these read SHPDAGKT, DTPGH, and NKLD.

This sequence belongs to the TRAFAC class translation factor GTPase superfamily. Classic translation factor GTPase family. PrfC subfamily.

It localises to the cytoplasm. In terms of biological role, increases the formation of ribosomal termination complexes and stimulates activities of RF-1 and RF-2. It binds guanine nucleotides and has strong preference for UGA stop codons. It may interact directly with the ribosome. The stimulation of RF-1 and RF-2 is significantly reduced by GTP and GDP, but not by GMP. The chain is Peptide chain release factor 3 from Buchnera aphidicola subsp. Acyrthosiphon pisum (strain Tuc7).